The following is a 329-amino-acid chain: GTP 3',8-cyclase (329 aa).

The 227-residue stretch at 8–234 folds into the Radical SAM core domain; that stretch reads VFARKFYYLR…QLRQRSDGPA (227 aa). Arg17 serves as a coordination point for GTP. [4Fe-4S] cluster is bound by residues Cys24 and Cys28. S-adenosyl-L-methionine is bound at residue Tyr30. Cys31 contacts [4Fe-4S] cluster. GTP is bound at residue Arg68. Gly72 contacts S-adenosyl-L-methionine. A GTP-binding site is contributed by Thr99. Residue Ser123 participates in S-adenosyl-L-methionine binding. GTP is bound at residue Lys160. An S-adenosyl-L-methionine-binding site is contributed by Met194. Cys257 and Cys260 together coordinate [4Fe-4S] cluster. 262 to 264 is a binding site for GTP; it reads RLR. [4Fe-4S] cluster is bound at residue Cys274.

This sequence belongs to the radical SAM superfamily. MoaA family. Monomer and homodimer. Requires [4Fe-4S] cluster as cofactor.

The enzyme catalyses GTP + AH2 + S-adenosyl-L-methionine = (8S)-3',8-cyclo-7,8-dihydroguanosine 5'-triphosphate + 5'-deoxyadenosine + L-methionine + A + H(+). The protein operates within cofactor biosynthesis; molybdopterin biosynthesis. Its function is as follows. Catalyzes the cyclization of GTP to (8S)-3',8-cyclo-7,8-dihydroguanosine 5'-triphosphate. This is GTP 3',8-cyclase from Shigella flexneri.